The primary structure comprises 151 residues: SsrA-binding protein (151 aa).

Belongs to the SmpB family.

The protein localises to the cytoplasm. Required for rescue of stalled ribosomes mediated by trans-translation. Binds to transfer-messenger RNA (tmRNA), required for stable association of tmRNA with ribosomes. tmRNA and SmpB together mimic tRNA shape, replacing the anticodon stem-loop with SmpB. tmRNA is encoded by the ssrA gene; the 2 termini fold to resemble tRNA(Ala) and it encodes a 'tag peptide', a short internal open reading frame. During trans-translation Ala-aminoacylated tmRNA acts like a tRNA, entering the A-site of stalled ribosomes, displacing the stalled mRNA. The ribosome then switches to translate the ORF on the tmRNA; the nascent peptide is terminated with the 'tag peptide' encoded by the tmRNA and targeted for degradation. The ribosome is freed to recommence translation, which seems to be the essential function of trans-translation. In Chlamydia trachomatis serovar A (strain ATCC VR-571B / DSM 19440 / HAR-13), this protein is SsrA-binding protein.